We begin with the raw amino-acid sequence, 475 residues long: Sulfate adenylyltransferase subunit 1 (475 aa).

The 215-residue stretch at 25-239 (KSLLRFLTCG…EVLETVEIQR (215 aa)) folds into the tr-type G domain. A G1 region spans residues 34–41 (GSVDDGKS). Residue 34–41 (GSVDDGKS) participates in GTP binding. Residues 92 to 96 (GITID) are G2. Residues 113-116 (DTPG) form a G3 region. GTP-binding positions include 113 to 117 (DTPGH) and 168 to 171 (NKMD). The tract at residues 168 to 171 (NKMD) is G4. Positions 206–208 (SAL) are G5.

The protein belongs to the TRAFAC class translation factor GTPase superfamily. Classic translation factor GTPase family. CysN/NodQ subfamily. In terms of assembly, heterodimer composed of CysD, the smaller subunit, and CysN.

The enzyme catalyses sulfate + ATP + H(+) = adenosine 5'-phosphosulfate + diphosphate. It functions in the pathway sulfur metabolism; hydrogen sulfide biosynthesis; sulfite from sulfate: step 1/3. In terms of biological role, with CysD forms the ATP sulfurylase (ATPS) that catalyzes the adenylation of sulfate producing adenosine 5'-phosphosulfate (APS) and diphosphate, the first enzymatic step in sulfur assimilation pathway. APS synthesis involves the formation of a high-energy phosphoric-sulfuric acid anhydride bond driven by GTP hydrolysis by CysN coupled to ATP hydrolysis by CysD. This chain is Sulfate adenylyltransferase subunit 1, found in Escherichia fergusonii (strain ATCC 35469 / DSM 13698 / CCUG 18766 / IAM 14443 / JCM 21226 / LMG 7866 / NBRC 102419 / NCTC 12128 / CDC 0568-73).